The primary structure comprises 883 residues: Alanine--tRNA ligase (883 aa).

Residues His-563, His-567, Cys-673, and His-677 each coordinate Zn(2+).

The protein belongs to the class-II aminoacyl-tRNA synthetase family. Requires Zn(2+) as cofactor.

It localises to the cytoplasm. It carries out the reaction tRNA(Ala) + L-alanine + ATP = L-alanyl-tRNA(Ala) + AMP + diphosphate. Its function is as follows. Catalyzes the attachment of alanine to tRNA(Ala) in a two-step reaction: alanine is first activated by ATP to form Ala-AMP and then transferred to the acceptor end of tRNA(Ala). Also edits incorrectly charged Ser-tRNA(Ala) and Gly-tRNA(Ala) via its editing domain. The protein is Alanine--tRNA ligase of Caulobacter sp. (strain K31).